Consider the following 673-residue polypeptide: Probable urea active transporter 2 (673 aa).

14 consecutive transmembrane segments (helical) span residues 8–28, 83–103, 132–152, 164–184, 196–218, 249–269, 287–307, 336–356, 391–411, 424–446, 451–471, 492–512, 559–579, and 592–612; these read GYGYGFALGLGAAFALLMAII, IMGGFMYGVGGTIQITLFLFL, VYLFYCISTNVLVSSLLLLGG, TVAACFLLPLGVMVYTTLGGL, VMIYIILIVTCYTVYCSSSLIGS, MMYLTWSVMIGGLSSVFGDPG, LMGGLCWWIIPMALGSSAGLA, IYGMASIFGKSGAAAGLVMLF, QLVRTAHLSVIGFSLFIGALS, LLTFLGIILTPEVSAVTLCLFWN, FSLVVGAPFGTITGVVCWLAS, FVGNIVSMASSPLYIVLLSYI, IGINLFILIGCYVIIPTALLG, and LIIVCLIWILVAAIYIILFPL.

This sequence belongs to the sodium:solute symporter (SSF) (TC 2.A.21) family.

The protein localises to the endoplasmic reticulum membrane. Involved in active transport of urea. This Schizosaccharomyces pombe (strain 972 / ATCC 24843) (Fission yeast) protein is Probable urea active transporter 2 (dur3-2).